The sequence spans 380 residues: Cytochrome b (380 aa).

Helical transmembrane passes span 34-54 (FGWL…FLAM), 78-99 (WLLR…YFHI), 114-134 (WNIG…GYVL), and 179-199 (FFTF…IHLL). Positions 84 and 98 each coordinate heme b. Residues H183 and H197 each contribute to the heme b site. H202 is an a ubiquinone binding site. A run of 4 helical transmembrane segments spans residues 227–247 (FKDL…STFA), 289–309 (LGGV…PIIH), 321–341 (AAKA…WIGG), and 348–368 (FISI…LIIP).

It belongs to the cytochrome b family. As to quaternary structure, the cytochrome bc1 complex contains 3 respiratory subunits (MT-CYB, CYC1 and UQCRFS1), 2 core proteins (UQCRC1 and UQCRC2) and probably 6 low-molecular weight proteins. The cofactor is heme b.

It is found in the mitochondrion inner membrane. Functionally, component of the ubiquinol-cytochrome c reductase complex (complex III or cytochrome b-c1 complex) that is part of the mitochondrial respiratory chain. The b-c1 complex mediates electron transfer from ubiquinol to cytochrome c. Contributes to the generation of a proton gradient across the mitochondrial membrane that is then used for ATP synthesis. The chain is Cytochrome b (mt-cyb) from Rana dybowskii (Dybovsky's frog).